Here is a 192-residue protein sequence, read N- to C-terminus: Pyridoxal 5'-phosphate synthase subunit PdxT (192 aa).

53–55 provides a ligand contact to L-glutamine; that stretch reads GES. Residue cysteine 82 is the Nucleophile of the active site. Residues arginine 108 and 134–135 each bind L-glutamine; that span reads IR. Catalysis depends on charge relay system residues histidine 170 and glutamate 172.

Belongs to the glutaminase PdxT/SNO family. In the presence of PdxS, forms a dodecamer of heterodimers. Only shows activity in the heterodimer.

The enzyme catalyses aldehydo-D-ribose 5-phosphate + D-glyceraldehyde 3-phosphate + L-glutamine = pyridoxal 5'-phosphate + L-glutamate + phosphate + 3 H2O + H(+). It carries out the reaction L-glutamine + H2O = L-glutamate + NH4(+). It participates in cofactor biosynthesis; pyridoxal 5'-phosphate biosynthesis. Its function is as follows. Catalyzes the hydrolysis of glutamine to glutamate and ammonia as part of the biosynthesis of pyridoxal 5'-phosphate. The resulting ammonia molecule is channeled to the active site of PdxS. This Methanothermobacter thermautotrophicus (strain ATCC 29096 / DSM 1053 / JCM 10044 / NBRC 100330 / Delta H) (Methanobacterium thermoautotrophicum) protein is Pyridoxal 5'-phosphate synthase subunit PdxT.